The primary structure comprises 194 residues: Holliday junction branch migration complex subunit RuvA (194 aa).

The tract at residues 1–61 (MIASLSGLLE…EDSVSLYGFA (61 aa)) is domain I. The domain II stretch occupies residues 62 to 136 (SVLECTVFEQ…GKLTSVPLEN (75 aa)). Residues 136 to 140 (NRKQE) form a flexible linker region. The segment at 141-194 (QAVDRSAEIVQALIGLGWQRQESAAAVESVLEKDQSLTMPEILRNALRYLAKQE) is domain III.

Belongs to the RuvA family. As to quaternary structure, homotetramer. Forms an RuvA(8)-RuvB(12)-Holliday junction (HJ) complex. HJ DNA is sandwiched between 2 RuvA tetramers; dsDNA enters through RuvA and exits via RuvB. An RuvB hexamer assembles on each DNA strand where it exits the tetramer. Each RuvB hexamer is contacted by two RuvA subunits (via domain III) on 2 adjacent RuvB subunits; this complex drives branch migration. In the full resolvosome a probable DNA-RuvA(4)-RuvB(12)-RuvC(2) complex forms which resolves the HJ.

Its subcellular location is the cytoplasm. In terms of biological role, the RuvA-RuvB-RuvC complex processes Holliday junction (HJ) DNA during genetic recombination and DNA repair, while the RuvA-RuvB complex plays an important role in the rescue of blocked DNA replication forks via replication fork reversal (RFR). RuvA specifically binds to HJ cruciform DNA, conferring on it an open structure. The RuvB hexamer acts as an ATP-dependent pump, pulling dsDNA into and through the RuvAB complex. HJ branch migration allows RuvC to scan DNA until it finds its consensus sequence, where it cleaves and resolves the cruciform DNA. This is Holliday junction branch migration complex subunit RuvA from Tropheryma whipplei (strain Twist) (Whipple's bacillus).